The chain runs to 441 residues: MTQPSLSVLYSDHLRTLTARADQALQRGGFDHLVIPSGTTHYQLFDDRDYPFAVNPQFKAWVPLTRMPHSWLVYTPGKRPTVIFYQPFDYWHVVPDAPSGWWVEHCDIHIIRTPEAALPLLPARTERCAILGEAASALGACVPNNPAAVLDFLDYQRAFKTPYELAVMRLAQQLAVRGHRAAEAAFRAGQSEFGIHMAYCSAVGQDANELPYGNIIALNEHGAVLHYTELGRQAPQPLRSFLIDAGASAHGYASDITRTYAADAGSEFQALIDAVDAAQLRMGNAVRAGVDYKQLHVDAHLSLMGILHDFGIITVSPEAALATGVSAAFFPHGLGHLIGLQVHDVAGFAASDRGGRIERPDGHPYLRLTRMLEPGMVVTIEPGVYFIDMLLDEVKKNGHAASVNWDRVAQFAPYGGIRIEDEVVCTDGAPENLTRPVFAAP.

Residues D244, D255, H336, E381, and E420 each coordinate Mn(2+).

This sequence belongs to the peptidase M24B family. Bacterial-type prolidase subfamily. Mn(2+) is required as a cofactor.

The enzyme catalyses Xaa-L-Pro dipeptide + H2O = an L-alpha-amino acid + L-proline. Functionally, splits dipeptides with a prolyl residue in the C-terminal position. The polypeptide is Xaa-Pro dipeptidase (Xanthomonas campestris pv. campestris (strain B100)).